The primary structure comprises 561 residues: Lysine--tRNA ligase (561 aa).

E409 and E416 together coordinate Mg(2+).

The protein belongs to the class-II aminoacyl-tRNA synthetase family. In terms of assembly, homodimer. It depends on Mg(2+) as a cofactor.

It is found in the cytoplasm. It carries out the reaction tRNA(Lys) + L-lysine + ATP = L-lysyl-tRNA(Lys) + AMP + diphosphate. The protein is Lysine--tRNA ligase of Nostoc punctiforme (strain ATCC 29133 / PCC 73102).